The sequence spans 203 residues: Endo-type membrane-bound lytic murein transglycosylase A (203 aa).

A signal peptide spans 1–15 (MKLRWFAFLIVLLAG). The N-palmitoyl cysteine moiety is linked to residue cysteine 16. Cysteine 16 carries the S-diacylglycerol cysteine lipid modification.

The protein belongs to the transglycosylase Slt family.

The protein resides in the cell outer membrane. The enzyme catalyses Endolytic cleavage of the (1-&gt;4)-beta-glycosidic linkage between N-acetylmuramic acid (MurNAc) and N-acetylglucosamine (GlcNAc) residues in peptidoglycan with concomitant formation of a 1,6-anhydrobond in the MurNAc residue.. In terms of biological role, murein-degrading enzyme. May play a role in recycling of muropeptides during cell elongation and/or cell division. Preferentially cleaves at a distance of more than two disaccharide units from the ends of the glycan chain. The chain is Endo-type membrane-bound lytic murein transglycosylase A from Shigella dysenteriae serotype 1 (strain Sd197).